The chain runs to 160 residues: Cytochrome b6-f complex subunit 4 (160 aa).

3 helical membrane passes run 36 to 56 (LLYM…GLAV), 95 to 115 (LLGV…PFIE), and 131 to 151 (TVFL…TLPI).

This sequence belongs to the cytochrome b family. PetD subfamily. As to quaternary structure, the 4 large subunits of the cytochrome b6-f complex are cytochrome b6, subunit IV (17 kDa polypeptide, petD), cytochrome f and the Rieske protein, while the 4 small subunits are petG, petL, petM and petN. The complex functions as a dimer.

It is found in the plastid. The protein resides in the chloroplast thylakoid membrane. Its function is as follows. Component of the cytochrome b6-f complex, which mediates electron transfer between photosystem II (PSII) and photosystem I (PSI), cyclic electron flow around PSI, and state transitions. This is Cytochrome b6-f complex subunit 4 from Nephroselmis olivacea (Green alga).